A 61-amino-acid chain; its full sequence is Large ribosomal subunit protein uL30 (61 aa).

This sequence belongs to the universal ribosomal protein uL30 family. Part of the 50S ribosomal subunit.

The chain is Large ribosomal subunit protein uL30 from Fervidobacterium nodosum (strain ATCC 35602 / DSM 5306 / Rt17-B1).